A 336-amino-acid polypeptide reads, in one-letter code: Dihydroorotate dehydrogenase (quinone) (336 aa).

Residues 62–66 (AGLDK) and Thr-86 each bind FMN. Residue Lys-66 coordinates substrate. 111 to 115 (NRMGF) provides a ligand contact to substrate. Asn-139 and Asn-172 together coordinate FMN. Residue Asn-172 coordinates substrate. Ser-175 serves as the catalytic Nucleophile. Asn-177 provides a ligand contact to substrate. FMN-binding residues include Lys-217 and Thr-245. 246 to 247 (NT) contributes to the substrate binding site. FMN is bound by residues Gly-268, Gly-297, and 318-319 (YS).

It belongs to the dihydroorotate dehydrogenase family. Type 2 subfamily. As to quaternary structure, monomer. Requires FMN as cofactor.

It is found in the cell membrane. The catalysed reaction is (S)-dihydroorotate + a quinone = orotate + a quinol. It functions in the pathway pyrimidine metabolism; UMP biosynthesis via de novo pathway; orotate from (S)-dihydroorotate (quinone route): step 1/1. Functionally, catalyzes the conversion of dihydroorotate to orotate with quinone as electron acceptor. This chain is Dihydroorotate dehydrogenase (quinone), found in Aliivibrio fischeri (strain ATCC 700601 / ES114) (Vibrio fischeri).